The chain runs to 577 residues: F-box-like/WD repeat-containing protein TBL1X (577 aa).

The region spanning 55–87 (TSDEVNFLVYRYLQESGFSHSAFTFGIESHISQ) is the LisH domain. In terms of domain architecture, F-box-like spans 92-137 (GTLVPPAALISILQKGLQYVEAEISINEDGTVFDGRPIESLSLIDA). The residue at position 153 (Lys-153) is an N6-acetyllysine. The tract at residues 177–202 (TTSAGVSHQNPSKNREATVNGEENRA) is disordered. Ser-183 is modified (phosphoserine). WD repeat units lie at residues 230 to 269 (GHESEVFICAWNPVSDLLASGSGDSTARIWNLNENSNGGS), 286 to 325 (PSNKDVTSLDWNTNGTLLATGSYDGFARIWTEDGNLASTL), 327 to 366 (QHKGPIFALKWNRKGNYILSAGVDKTTIIWDAHTGEAKQQ), 369 to 409 (FHSA…KTFQ), 410 to 449 (GHTNEVNAIKWDPSGMLLASCSDDMTLKIWSMKQEVCIHD), 452 to 500 (AHNK…CTHT), 503 to 542 (KHQEPVYSVAFSPDGKYLASGSFDKCVHIWNTQSGNLVHS), and 544 to 576 (RGTGGIFEVCWNARGDKVGASASDGSVCVLDLR). Residue Lys-340 forms a Glycyl lysine isopeptide (Lys-Gly) (interchain with G-Cter in SUMO2) linkage.

This sequence belongs to the WD repeat EBI family. As to quaternary structure, homotetramer; dimer of dimers. Component of the N-Cor repressor complex, at least composed of NCOR1, NCOR2, HDAC3, TBL1X, TBL1R, CORO2A and GPS2. Interacts with GPS2 (when sumoylated); leading to protect GPS2 against degradation by the proteasome. Component of a E3 ubiquitin ligase complex containing UBE2D1, SIAH1, CACYBP/SIP, SKP1, APC and TBL1X. Probably part of other corepressor complexes, that do not contain NCOR1 and NCOR2. Interacts with histones H2B, H3a and H4. Interacts with MECP2; recruits TBL1X to the heterochromatin foci. Interacts with USP44. In terms of tissue distribution, ubiquitous.

The protein resides in the nucleus. Functionally, F-box-like protein involved in the recruitment of the ubiquitin/19S proteasome complex to nuclear receptor-regulated transcription units. Plays an essential role in transcription activation mediated by nuclear receptors. Probably acts as integral component of corepressor complexes that mediates the recruitment of the 19S proteasome complex, leading to the subsequent proteasomal degradation of transcription repressor complexes, thereby allowing cofactor exchange. This Homo sapiens (Human) protein is F-box-like/WD repeat-containing protein TBL1X (TBL1X).